Consider the following 30-residue polypeptide: LQPKLEYQYKYHGIVALGIPSYKTQFYDAH.

Homodimer. Secreted into the hemolymph.

Its subcellular location is the secreted. It is found in the extracellular space. Clotting protein. In Panulirus interruptus (California spiny lobster), this protein is Fibrinogen.